A 791-amino-acid polypeptide reads, in one-letter code: MKINSFLIILILLFISIKNSNGEPEKKFKLITLLAAHVQDLGFNNMVNRGHVEVSKAMKLEDSQAIVVVGYNDTIRILAPLVAVGDVDLVICSSQDHAQACRELATKYKGSSIKTQFLVRGSGEATSNLITYSYNYANANYISGYFAGLYTKTNKIGFLSPGAIDNNNDSFVYAFWYGAKRANPDISFYYYNIGNYLNPDKTVAATKDLLDMGCDMVADTLNDFSTGNTLIANNRKTAMGTSGFPQRDVYGEDVIYSYNYNWFKLFYPVAQSVYSGNTNNTNWYADFNLNETISFFGLSFSFTVPNETLTKFYEELDYLKRTPRLSHPYFCNDLMYEYAKKNHLTMSTNDSTHCLANSQFTRINAPFPGMTWLGNYEITLTEVYQSRPIQIAISSISSFFIVTVLVMMGLVVRFRKNPSIRSASPIFLNFILFGALIIYVGIIIWSSSINSASCNAQFWLVTLGFTTLIGSLVVKNVRIWLIFDNPELKLVKITNLQLVPWVGVCLVINIILMSILTSVGDLREVNAQGIDSLGKYEFMRICKMNSSGASTLYTILAYFAALLLIGVFVSWKIRIVDILEFNESKAIANTLYAISFCLFVIVPLMISPQDKQSEKIILCIAGLFIVTAAVLIIFVPKFYRVYIFGSGGTSDMFYKKKKQSPVATARAESTSKGSSGGGAGSGGATGGSGVKTNKRGNLVSGDFSDDTESSLSEPNKPVKVVAGAVLAEFTDDTISDLDNIDQPIEIITENGQDSNNNNNNEENKDNNIENNKISEEIKENLKNEENNDGDN.

An N-terminal signal peptide occupies residues 1 to 22; sequence MKINSFLIILILLFISIKNSNG. Residues 23-390 lie on the Extracellular side of the membrane; that stretch reads EPEKKFKLIT…TEVYQSRPIQ (368 aa). 6 N-linked (GlcNAc...) asparagine glycosylation sites follow: asparagine 72, asparagine 168, asparagine 279, asparagine 290, asparagine 306, and asparagine 349. A helical membrane pass occupies residues 391–411; the sequence is IAISSISSFFIVTVLVMMGLV. The Cytoplasmic segment spans residues 412-424; that stretch reads VRFRKNPSIRSAS. The chain crosses the membrane as a helical span at residues 425–445; it reads PIFLNFILFGALIIYVGIIIW. Residues 446–453 lie on the Extracellular side of the membrane; sequence SSSINSAS. A helical membrane pass occupies residues 454-474; the sequence is CNAQFWLVTLGFTTLIGSLVV. Residues 475–495 are Cytoplasmic-facing; sequence KNVRIWLIFDNPELKLVKITN. A helical transmembrane segment spans residues 496 to 516; it reads LQLVPWVGVCLVINIILMSIL. Residues 517-550 are Extracellular-facing; it reads TSVGDLREVNAQGIDSLGKYEFMRICKMNSSGAS. Asparagine 545 is a glycosylation site (N-linked (GlcNAc...) asparagine). The chain crosses the membrane as a helical span at residues 551–571; sequence TLYTILAYFAALLLIGVFVSW. The Cytoplasmic segment spans residues 572 to 585; sequence KIRIVDILEFNESK. A helical transmembrane segment spans residues 586–606; that stretch reads AIANTLYAISFCLFVIVPLMI. At 607 to 615 the chain is on the extracellular side; sequence SPQDKQSEK. Residues 616–636 traverse the membrane as a helical segment; that stretch reads IILCIAGLFIVTAAVLIIFVP. Residues 637–791 are Cytoplasmic-facing; sequence KFYRVYIFGS…KNEENNDGDN (155 aa). 2 disordered regions span residues 664 to 715 and 746 to 791; these read TARA…SEPN and IITE…DGDN. Gly residues predominate over residues 674–689; the sequence is SSGGGAGSGGATGGSG. The segment covering 749–760 has biased composition (low complexity); sequence ENGQDSNNNNNN. Residues 752-781 are a coiled coil; sequence QDSNNNNNNEENKDNNIENNKISEEIKENL. Basic and acidic residues predominate over residues 761-785; sequence EENKDNNIENNKISEEIKENLKNEE.

This sequence in the N-terminal section; belongs to the BMP lipoprotein family. In the C-terminal section; belongs to the G-protein coupled receptor 3 family. GABA-B receptor subfamily.

It is found in the membrane. The polypeptide is Metabotropic glutamate receptor-like protein D (grlD) (Dictyostelium discoideum (Social amoeba)).